Consider the following 92-residue polypeptide: RIIa domain-containing protein 1 (92 aa).

An RIIa domain is found at Lys-43–Leu-77.

This is RIIa domain-containing protein 1 (RIIAD1) from Homo sapiens (Human).